Reading from the N-terminus, the 475-residue chain is Ribulose bisphosphate carboxylase large chain (475 aa).

A propeptide spanning residues 1–2 (MV) is cleaved from the precursor. An N-acetylproline modification is found at proline 3. At lysine 14 the chain carries N6,N6,N6-trimethyllysine. Substrate contacts are provided by asparagine 123 and threonine 173. Lysine 175 functions as the Proton acceptor in the catalytic mechanism. Lysine 177 serves as a coordination point for substrate. The Mg(2+) site is built by lysine 201, aspartate 203, and glutamate 204. Position 201 is an N6-carboxylysine (lysine 201). Histidine 294 acts as the Proton acceptor in catalysis. Positions 295, 327, and 379 each coordinate substrate.

This sequence belongs to the RuBisCO large chain family. Type I subfamily. In terms of assembly, heterohexadecamer of 8 large chains and 8 small chains. Requires Mg(2+) as cofactor.

Its subcellular location is the plastid. It is found in the chloroplast. The catalysed reaction is 2 (2R)-3-phosphoglycerate + 2 H(+) = D-ribulose 1,5-bisphosphate + CO2 + H2O. The enzyme catalyses D-ribulose 1,5-bisphosphate + O2 = 2-phosphoglycolate + (2R)-3-phosphoglycerate + 2 H(+). In terms of biological role, ruBisCO catalyzes two reactions: the carboxylation of D-ribulose 1,5-bisphosphate, the primary event in carbon dioxide fixation, as well as the oxidative fragmentation of the pentose substrate in the photorespiration process. Both reactions occur simultaneously and in competition at the same active site. This is Ribulose bisphosphate carboxylase large chain from Chlamydomonas moewusii (Chlamydomonas eugametos).